The sequence spans 220 residues: Glutamine amidotransferase-like class 1 domain-containing protein 1 (220 aa).

A signal peptide spans Met1 to Ala38. Asn201 carries N-linked (GlcNAc...) asparagine glycosylation.

The protein belongs to the peptidase C56 family. Homotetramer. Component of the FERRY complex composed of five subunits, TBCK, PPP1R21, FERRY3, CRYZL1 and GATD1 with a ratio of 1:2:1:2:4, respectively.

The protein resides in the secreted. It localises to the early endosome. Component of the FERRY complex (Five-subunit Endosomal Rab5 and RNA/ribosome intermediary). The FERRY complex directly interacts with mRNAs and RAB5A, and functions as a RAB5A effector involved in the localization and the distribution of specific mRNAs most likely by mediating their endosomal transport. The complex recruits mRNAs and ribosomes to early endosomes through direct mRNA-interaction. The protein is Glutamine amidotransferase-like class 1 domain-containing protein 1 of Homo sapiens (Human).